The sequence spans 198 residues: Ribonuclease HII (198 aa).

An RNase H type-2 domain is found at 11 to 198 (NLIAGVDEVG…GPVKRVLGLV (188 aa)). Residues Asp17, Glu18, and Asp109 each coordinate a divalent metal cation.

Belongs to the RNase HII family. It depends on Mn(2+) as a cofactor. Mg(2+) is required as a cofactor.

The protein resides in the cytoplasm. The enzyme catalyses Endonucleolytic cleavage to 5'-phosphomonoester.. Endonuclease that specifically degrades the RNA of RNA-DNA hybrids. This chain is Ribonuclease HII, found in Yersinia pseudotuberculosis serotype O:1b (strain IP 31758).